The following is a 483-amino-acid chain: Aspartyl/glutamyl-tRNA(Asn/Gln) amidotransferase subunit B (483 aa).

This sequence belongs to the GatB/GatE family. GatB subfamily. In terms of assembly, heterotrimer of A, B and C subunits.

The catalysed reaction is L-glutamyl-tRNA(Gln) + L-glutamine + ATP + H2O = L-glutaminyl-tRNA(Gln) + L-glutamate + ADP + phosphate + H(+). The enzyme catalyses L-aspartyl-tRNA(Asn) + L-glutamine + ATP + H2O = L-asparaginyl-tRNA(Asn) + L-glutamate + ADP + phosphate + 2 H(+). In terms of biological role, allows the formation of correctly charged Asn-tRNA(Asn) or Gln-tRNA(Gln) through the transamidation of misacylated Asp-tRNA(Asn) or Glu-tRNA(Gln) in organisms which lack either or both of asparaginyl-tRNA or glutaminyl-tRNA synthetases. The reaction takes place in the presence of glutamine and ATP through an activated phospho-Asp-tRNA(Asn) or phospho-Glu-tRNA(Gln). This is Aspartyl/glutamyl-tRNA(Asn/Gln) amidotransferase subunit B from Rickettsia typhi (strain ATCC VR-144 / Wilmington).